Consider the following 509-residue polypeptide: Zinc finger CCCH-type with G patch domain-containing protein (509 aa).

Residues 155-178 (PCNYYLEGECRFDEIRCRYSHGAL) form a C3H1-type zinc finger. The tract at residues 254–277 (EDELTSEDSSSSPHDESSDEIDSD) is disordered. One can recognise a G-patch domain in the interval 310–356 (TRGIGSKLMEKMGYIHGTGLGSEGRGIVTPVSAQILPQGRSLDACME). Residues 407 to 430 (LGGGESRHQGDQAAKKAKTNDLQQ) form a disordered region. The segment covering 411-420 (ESRHQGDQAA) has biased composition (basic and acidic residues).

The protein resides in the nucleus. Functionally, transcription repressor. This Drosophila pseudoobscura pseudoobscura (Fruit fly) protein is Zinc finger CCCH-type with G patch domain-containing protein.